A 211-amino-acid polypeptide reads, in one-letter code: Large ribosomal subunit protein bL25 (211 aa).

Residues 186 to 211 are disordered; the sequence is GRALQSMDAAESAVEQPGEQPATAAG.

The protein belongs to the bacterial ribosomal protein bL25 family. CTC subfamily. As to quaternary structure, part of the 50S ribosomal subunit; part of the 5S rRNA/L5/L18/L25 subcomplex. Contacts the 5S rRNA. Binds to the 5S rRNA independently of L5 and L18.

In terms of biological role, this is one of the proteins that binds to the 5S RNA in the ribosome where it forms part of the central protuberance. This Gloeobacter violaceus (strain ATCC 29082 / PCC 7421) protein is Large ribosomal subunit protein bL25.